We begin with the raw amino-acid sequence, 349 residues long: Two pore potassium channel b (349 aa).

The segment at 1 to 53 (MAALDQQPLLHDGGDQKPPPEGAARRFRRCRTAPSSEPPPTDKDNSSAADAPP) is disordered. The Cytoplasmic segment spans residues 1–66 (MAALDQQPLL…FTGGGRPSFR (66 aa)). Residues 67 to 87 (LVGLLLVAYLLLGTIAFYLAM) traverse the membrane as a helical segment. The segment at residues 100–119 (DALYFCVVTMTTVGYGDLVP) is an intramembrane region (pore-forming). A helical membrane pass occupies residues 123–143 (AAKLLACAFVFAGVAVVGTFL). Residues 144-180 (SKAADYLVEKQEALLFRALHSHTMVRAMEMNKVRYKL) lie on the Cytoplasmic side of the membrane. A helical transmembrane segment spans residues 181 to 201 (YTAGLLLVAAVASGTVVLWKV). The pore-forming intramembrane region spans 208-227 (DAFYCVCATVTTLGYGDRSF). The helical transmembrane segment at 234-254 (AFAVAWITVSTVVVALFFLYA) threads the bilayer. At 255-349 (AELYTERRQR…PTPDPPPSLR (95 aa)) the chain is on the cytoplasmic side. 2 consecutive EF-hand domains span residues 271–306 (LRRR…ELGK) and 310–345 (EDIS…PDPP). 10 residues coordinate Ca(2+): aspartate 284, aspartate 286, aspartate 288, arginine 290, aspartate 295, aspartate 323, aspartate 325, serine 327, threonine 329, and aspartate 334. Residues 326–349 (HSGTLSPADLAAAQPTPDPPPSLR) form a disordered region.

It belongs to the two pore domain potassium channel (TC 1.A.1.7) family. As to quaternary structure, homodimer.

The protein localises to the vacuole membrane. Its function is as follows. Highly selective inward-rectifying potassium channel that is specifically located in the tonoplast of protein storage vacuoles. Functions independently of the voltage difference across the membrane. The sequence is that of Two pore potassium channel b (TPKB) from Oryza sativa subsp. japonica (Rice).